Reading from the N-terminus, the 428-residue chain is Succinyl-CoA--L-malate CoA-transferase alpha subunit (428 aa).

The segment at 1 to 31 is disordered; it reads MPPTGEEPSGHAESKPPASDPMSTPGTGQEQ. Positions 21–31 are enriched in polar residues; that stretch reads PMSTPGTGQEQ. The active-site Nucleophile is Asp-200.

This sequence belongs to the CoA-transferase III family. In terms of assembly, forms a large complex composed of six heterodimers (alpha, beta).

The catalysed reaction is succinyl-CoA + (S)-malate = (S)-malyl-CoA + succinate. It carries out the reaction (3S)-citramalate + succinyl-CoA = (3S)-citramalyl-CoA + succinate. In terms of biological role, involved in the 3-hydroxypropionate cycle used for autotrophic carbon dioxide fixation. Catalyzes the transfer of CoA moiety from succinyl-CoA to L-malate to yield L-malyl-CoA. It is highly specific for succinyl-CoA as the CoA donor, however it can accept L-citramalate instead of L-malate as the CoA acceptor. The polypeptide is Succinyl-CoA--L-malate CoA-transferase alpha subunit (smtA) (Chloroflexus aurantiacus).